The following is a 20-amino-acid chain: Superoxide dismutase [Fe] (20 aa).

Belongs to the iron/manganese superoxide dismutase family. Homodimer. Fe cation serves as cofactor.

It is found in the periplasm. It carries out the reaction 2 superoxide + 2 H(+) = H2O2 + O2. Destroys superoxide anion radicals which are normally produced within the cells and which are toxic to biological systems. The polypeptide is Superoxide dismutase [Fe] (sodB) (Photobacterium damsela subsp. piscicida (Pasteurella piscicida)).